The chain runs to 400 residues: Sphingosine 1-phosphate receptor 5 (400 aa).

At 1 to 41 (MEPGLLRPAPVSEVIVLHYNYTGKLRGARYQPGAGLRADAA) the chain is on the extracellular side. N-linked (GlcNAc...) asparagine glycosylation occurs at Asn-20. A helical membrane pass occupies residues 42–62 (VCLAVCAFIVLENLAVLLVLV). Topologically, residues 63 to 68 (RHPRFH) are cytoplasmic. A helical membrane pass occupies residues 69-89 (APMFLLLGSLTLSDLLAGAAY). The Extracellular portion of the chain corresponds to 90–111 (ATNILLSGPLTLRLSPALWFAR). Residues 112–132 (EGGVFVALAASVLSLLAIALE) traverse the membrane as a helical segment. Residues 133-151 (RHLTMARRGPAPAASRART) are Cytoplasmic-facing. A helical membrane pass occupies residues 152-172 (LAMAVAAWGASLLLGLLPALG). Over 173-192 (WNCLGRLETCSTVLPLYAKA) the chain is Extracellular. A helical transmembrane segment spans residues 193–213 (YVLFCVLAFLGILAAICALYA). Over 214 to 253 (RIYCQVRANARRLRAGPGSRRATSSSRSRHTPRSLALLRT) the chain is Cytoplasmic. The chain crosses the membrane as a helical span at residues 254-274 (LSVVLLAFVACWGPLFLLLLL). Residues 275–288 (DVACPARACPVLLQ) lie on the Extracellular side of the membrane. The chain crosses the membrane as a helical span at residues 289–309 (ADPFLGLAMANSLLNPIIYTF). The Cytoplasmic segment spans residues 310-400 (TNRDLRHALL…NRSLVPTATD (91 aa)). A lipid anchor (S-palmitoyl cysteine) is attached at Cys-324. The disordered stretch occupies residues 331-400 (QDSSNSLQRS…NRSLVPTATD (70 aa)). A phosphoserine mark is found at Ser-340, Ser-342, and Ser-384. Residues 360–400 (DRSSSPSEHLSPQQDGVDTSCSTGSPGVATANRSLVPTATD) are compositionally biased toward polar residues.

It belongs to the G-protein coupled receptor 1 family. In terms of tissue distribution, expressed in spleen and brain. In the CNS expression is restricted to oligodendrocytes.

The protein resides in the cell membrane. In terms of biological role, receptor for the lysosphingolipid sphingosine 1-phosphate (S1P). S1P is a bioactive lysophospholipid that elicits diverse physiological effect on most types of cells and tissues. Is coupled to both the G(i/0)alpha and G(12) subclass of heteromeric G-proteins. S1P activation on oligodendroglial cells modulates two distinct functional pathways mediating either process retraction or cell survival. S1P activation on O4-positive pre-oligodendrocytes induces process retraction via a Rho kinase/collapsin response-mediated protein signaling pathway. The S1P-induced survival of mature oligodendrocytes is mediated through a pertussis toxin-sensitive, Akt-dependent pathway. S1P activation on oligodendroglial cells modulates two distinct functional pathways mediating either process retraction or cell survival. These effects depend on the developmental stage of the cell. The chain is Sphingosine 1-phosphate receptor 5 (S1pr5) from Mus musculus (Mouse).